A 380-amino-acid chain; its full sequence is tRNA(Met) cytidine acetate ligase (380 aa).

ATP-binding positions include 7 to 20 (IAEY…HLYQ), glycine 101, asparagine 151, and arginine 176.

The protein belongs to the TmcAL family.

Its subcellular location is the cytoplasm. It carries out the reaction cytidine(34) in elongator tRNA(Met) + acetate + ATP = N(4)-acetylcytidine(34) in elongator tRNA(Met) + AMP + diphosphate. Catalyzes the formation of N(4)-acetylcytidine (ac(4)C) at the wobble position of elongator tRNA(Met), using acetate and ATP as substrates. First activates an acetate ion to form acetyladenylate (Ac-AMP) and then transfers the acetyl group to tRNA to form ac(4)C34. The polypeptide is tRNA(Met) cytidine acetate ligase (Ligilactobacillus salivarius (strain UCC118) (Lactobacillus salivarius)).